A 434-amino-acid polypeptide reads, in one-letter code: Serine--tRNA ligase (434 aa).

Residue 237 to 239 (TAE) participates in L-serine binding. 268 to 270 (RAE) lines the ATP pocket. Residue glutamate 291 coordinates L-serine. 358–361 (EISS) provides a ligand contact to ATP. Serine 393 contacts L-serine.

The protein belongs to the class-II aminoacyl-tRNA synthetase family. Type-1 seryl-tRNA synthetase subfamily. In terms of assembly, homodimer. The tRNA molecule binds across the dimer.

The protein localises to the cytoplasm. It catalyses the reaction tRNA(Ser) + L-serine + ATP = L-seryl-tRNA(Ser) + AMP + diphosphate + H(+). It carries out the reaction tRNA(Sec) + L-serine + ATP = L-seryl-tRNA(Sec) + AMP + diphosphate + H(+). It functions in the pathway aminoacyl-tRNA biosynthesis; selenocysteinyl-tRNA(Sec) biosynthesis; L-seryl-tRNA(Sec) from L-serine and tRNA(Sec): step 1/1. Functionally, catalyzes the attachment of serine to tRNA(Ser). Is also able to aminoacylate tRNA(Sec) with serine, to form the misacylated tRNA L-seryl-tRNA(Sec), which will be further converted into selenocysteinyl-tRNA(Sec). The polypeptide is Serine--tRNA ligase (Rhodopseudomonas palustris (strain BisB5)).